Here is a 475-residue protein sequence, read N- to C-terminus: CAAX prenyl protease 1 homolog (475 aa).

At 1 to 18 (MGMWASLDALWEMPAEKR) the chain is on the lumenal side. The chain crosses the membrane as a helical span at residues 19 to 39 (IFGAVLLFSWTVYLWETFLAQ). At 40 to 81 (RQRRIYKTTTHVPPELGQIMDSETFEKSRLYQLDKSTFSFWS) the chain is on the nuclear side. The chain crosses the membrane as a helical span at residues 82-102 (GLYSETEGTLILLFGGIPYLW). Residues 103–123 (RLSGRFCGYAGFGPEYEITQS) lie on the Lumenal side of the membrane. The helical transmembrane segment at 124-144 (LVFLLLATLFSALTGLPWSLY) threads the bilayer. Topologically, residues 145–170 (NTFVIEEKHGFNQQTLGFFMKDAIKK) are nuclear. The chain crosses the membrane as a helical span at residues 171–191 (FVVTQCILLPVSSLLLYIIKI). Topologically, residues 192 to 195 (GGDY) are lumenal. A helical transmembrane segment spans residues 196 to 216 (FFIYAWLFTLVVSLVLVTIYA). Over 217 to 347 (DYIAPLFDKF…GHWKLGHTVK (131 aa)) the chain is Nuclear. Residue H335 coordinates Zn(2+). The active site involves E336. H339 contributes to the Zn(2+) binding site. Residues 348–368 (NIIISQMNSFLCFFLFAVLIG) form a helical membrane-spanning segment. The Lumenal segment spans residues 369 to 382 (RKELFAAFGFYDSQ). A helical transmembrane segment spans residues 383–405 (PTLIGLLIIFQFIFSPYNEVLSF). At 406 to 475 (CLTVLSRRFE…LQALKTMKQH (70 aa)) the chain is on the nuclear side. E415 is a binding site for Zn(2+).

Belongs to the peptidase M48A family. The cofactor is Zn(2+). As to expression, widely expressed. High levels in kidney, prostate, testis and ovary.

Its subcellular location is the endoplasmic reticulum membrane. It localises to the nucleus inner membrane. It is found in the early endosome membrane. The protein localises to the late endosome membrane. The catalysed reaction is Hydrolyzes the peptide bond -P2-(S-farnesyl or geranylgeranyl)C-P1'-P2'-P3'-COOH where P1' and P2' are amino acids with aliphatic side chains and P3' is any C-terminal residue.. Transmembrane metalloprotease whose catalytic activity is critical for processing lamin A/LMNA on the inner nuclear membrane and clearing clogged translocons on the endoplasmic reticulum. Proteolytically removes the C-terminal three residues of farnesylated proteins. Also plays an antiviral role independently of its protease activity by restricting enveloped RNA and DNA viruses, including influenza A, Zika, Ebola, Sindbis, vesicular stomatitis, cowpox, and vaccinia. Mechanistically, controls IFITM antiviral pathway to hinder viruses from breaching the endosomal barrier by modulating membrane fluidity. The polypeptide is CAAX prenyl protease 1 homolog (Homo sapiens (Human)).